The following is a 318-amino-acid chain: 5'-3' exonuclease (318 aa).

Positions 194 to 278 constitute a 5'-3' exonuclease domain; sequence AYAELALLRG…ATDAPVTLST (85 aa).

In terms of biological role, 5'-3' exonuclease acting preferentially on double-stranded DNA. The polypeptide is 5'-3' exonuclease (Mycobacterium tuberculosis (strain ATCC 25618 / H37Rv)).